A 171-amino-acid polypeptide reads, in one-letter code: Peptide methionine sulfoxide reductase MsrA (171 aa).

Residue cysteine 13 is part of the active site.

It belongs to the MsrA Met sulfoxide reductase family.

The enzyme catalyses L-methionyl-[protein] + [thioredoxin]-disulfide + H2O = L-methionyl-(S)-S-oxide-[protein] + [thioredoxin]-dithiol. It carries out the reaction [thioredoxin]-disulfide + L-methionine + H2O = L-methionine (S)-S-oxide + [thioredoxin]-dithiol. Functionally, has an important function as a repair enzyme for proteins that have been inactivated by oxidation. Catalyzes the reversible oxidation-reduction of methionine sulfoxide in proteins to methionine. The protein is Peptide methionine sulfoxide reductase MsrA of Mycolicibacterium paratuberculosis (strain ATCC BAA-968 / K-10) (Mycobacterium paratuberculosis).